Here is a 97-residue protein sequence, read N- to C-terminus: Homeobox protein HD-9 (97 aa).

The homeobox DNA-binding region spans Met-6–Cys-65.

The protein localises to the nucleus. The protein is Homeobox protein HD-9 (HD-9) of Encephalitozoon cuniculi (strain GB-M1) (Microsporidian parasite).